The following is a 399-amino-acid chain: Protein IQ-DOMAIN 25 (399 aa).

The short motif at 1-8 (MRKNLTKL) is the Nuclear localization signal element. Calmodulin-binding regions lie at residues 81–91 (KERRTHAIAVA) and 99–110 (DAAVAAAKAAAA). IQ domains lie at 130–158 (EHRA…GVVK) and 159–181 (IQAL…SMEA). 3 disordered regions span residues 198 to 219 (NGNA…ENRN), 262 to 302 (SPLS…SPAR), and 346 to 377 (LRSH…VRMQ). Over residues 285 to 294 (KFPTAQSTPR) the composition is skewed to polar residues.

This sequence belongs to the IQD family. Binds to multiple calmodulin (CaM) in the presence of Ca(2+) and CaM-like proteins.

It is found in the nucleus. It localises to the cell membrane. Functionally, may be involved in cooperative interactions with calmodulins or calmodulin-like proteins. Recruits calmodulin proteins to microtubules, thus being a potential scaffold in cellular signaling and trafficking. May associate with nucleic acids and regulate gene expression at the transcriptional or post-transcriptional level. This chain is Protein IQ-DOMAIN 25, found in Arabidopsis thaliana (Mouse-ear cress).